Reading from the N-terminus, the 320-residue chain is Cytochrome f (320 aa).

Residues 1 to 35 form the signal peptide; it reads MQTRNTFSWIREEITRSISVSLMIYIITWASISSA. Tyr-36, Cys-56, Cys-59, and His-60 together coordinate heme. A helical membrane pass occupies residues 286-306; sequence VQGLLFFLGSVVLAQIFLVLK.

Belongs to the cytochrome f family. In terms of assembly, the 4 large subunits of the cytochrome b6-f complex are cytochrome b6, subunit IV (17 kDa polypeptide, petD), cytochrome f and the Rieske protein, while the 4 small subunits are PetG, PetL, PetM and PetN. The complex functions as a dimer. The cofactor is heme.

It is found in the plastid. It localises to the chloroplast thylakoid membrane. Its function is as follows. Component of the cytochrome b6-f complex, which mediates electron transfer between photosystem II (PSII) and photosystem I (PSI), cyclic electron flow around PSI, and state transitions. The chain is Cytochrome f from Lepidium virginicum (Virginia pepperweed).